The primary structure comprises 452 residues: Pup--protein ligase (452 aa).

E9 contacts Mg(2+). Residue R53 participates in ATP binding. Y55 is a binding site for Mg(2+). D57 functions as the Proton acceptor in the catalytic mechanism. Residue E63 participates in Mg(2+) binding. 2 residues coordinate ATP: T66 and W419.

The protein belongs to the Pup ligase/Pup deamidase family. Pup-conjugating enzyme subfamily.

The catalysed reaction is ATP + [prokaryotic ubiquitin-like protein]-L-glutamate + [protein]-L-lysine = ADP + phosphate + N(6)-([prokaryotic ubiquitin-like protein]-gamma-L-glutamyl)-[protein]-L-lysine.. The protein operates within protein degradation; proteasomal Pup-dependent pathway. It functions in the pathway protein modification; protein pupylation. Its function is as follows. Catalyzes the covalent attachment of the prokaryotic ubiquitin-like protein modifier Pup to the proteasomal substrate proteins, thereby targeting them for proteasomal degradation. This tagging system is termed pupylation. The ligation reaction involves the side-chain carboxylate of the C-terminal glutamate of Pup and the side-chain amino group of a substrate lysine. The chain is Pup--protein ligase from Rhodococcus erythropolis (strain PR4 / NBRC 100887).